Reading from the N-terminus, the 276-residue chain is Large ribosomal subunit protein uL2 (276 aa).

Disordered regions lie at residues 36–58 and 214–276; these read PLHKKGGRNNQGKMTVRHQGGGH and LGKR…RRKK.

Belongs to the universal ribosomal protein uL2 family. As to quaternary structure, part of the 50S ribosomal subunit. Forms a bridge to the 30S subunit in the 70S ribosome.

One of the primary rRNA binding proteins. Required for association of the 30S and 50S subunits to form the 70S ribosome, for tRNA binding and peptide bond formation. It has been suggested to have peptidyltransferase activity; this is somewhat controversial. Makes several contacts with the 16S rRNA in the 70S ribosome. This Halalkalibacterium halodurans (strain ATCC BAA-125 / DSM 18197 / FERM 7344 / JCM 9153 / C-125) (Bacillus halodurans) protein is Large ribosomal subunit protein uL2.